The following is a 464-amino-acid chain: UDP-N-acetylmuramoylalanine--D-glutamate ligase (464 aa).

127 to 133 (GSNGKST) provides a ligand contact to ATP.

The protein belongs to the MurCDEF family.

Its subcellular location is the cytoplasm. It catalyses the reaction UDP-N-acetyl-alpha-D-muramoyl-L-alanine + D-glutamate + ATP = UDP-N-acetyl-alpha-D-muramoyl-L-alanyl-D-glutamate + ADP + phosphate + H(+). The protein operates within cell wall biogenesis; peptidoglycan biosynthesis. In terms of biological role, cell wall formation. Catalyzes the addition of glutamate to the nucleotide precursor UDP-N-acetylmuramoyl-L-alanine (UMA). The protein is UDP-N-acetylmuramoylalanine--D-glutamate ligase of Dinoroseobacter shibae (strain DSM 16493 / NCIMB 14021 / DFL 12).